A 343-amino-acid chain; its full sequence is Histone H1.8 (343 aa).

The span at 1–32 (MAPGSIASSDTSSSTSSSSTSSASSASAEGSS) shows a compositional bias: low complexity. Disordered regions lie at residues 1-50 (MAPG…VRAP) and 122-343 (ATGS…EAEG). Positions 52-130 (RHPPVLRMVL…GATGSFKLVP (79 aa)) constitute an H15 domain. Basic residues predominate over residues 132 to 142 (DKRKIPPRKTA). 3 stretches are compositionally biased toward basic and acidic residues: residues 150–183 (EGKD…ERAA), 199–219 (QTKD…RPDK), and 235–247 (KVKE…ADTK). Residues 161–176 (KKDPANTVEVKKGSRK) carry the Nuclear localization signal motif. Residues 253–265 (QPGSQSSKSTVTK) show a composition bias toward polar residues.

Belongs to the histone H1/H5 family. In terms of tissue distribution, oocyte (at protein level).

Its subcellular location is the cytoplasm. It is found in the nucleus. The protein resides in the chromosome. Its function is as follows. May play a key role in the control of gene expression during oogenesis and early embryogenesis, presumably through the perturbation of chromatin structure. Essential for meiotic maturation of germinal vesicle-stage oocytes. The somatic type linker histone H1c is rapidly replaced by H1oo in a donor nucleus transplanted into an oocyte. The greater mobility of H1oo as compared to H1c may contribute to this rapid replacement and increased instability of the embryonic chromatin structure. The rapid replacement of H1c with H1oo may play an important role in nuclear remodeling. The sequence is that of Histone H1.8 from Bos taurus (Bovine).